The following is a 343-amino-acid chain: Heat-inducible transcription repressor HrcA (343 aa).

It belongs to the HrcA family.

Functionally, negative regulator of class I heat shock genes (grpE-dnaK-dnaJ and groELS operons). Prevents heat-shock induction of these operons. The protein is Heat-inducible transcription repressor HrcA of Clostridium botulinum (strain Alaska E43 / Type E3).